The primary structure comprises 466 residues: Probable periplasmic serine protease do/HhoA-like (466 aa).

Positions 1-29 (MKKTRFVLNSIALGLSVLSTSFVAHVAQA) are cleaved as a signal peptide. Residues histidine 120, aspartate 150, and serine 226 each act as charge relay system in the active site. 2 PDZ domains span residues 270–361 (ILEF…LRDG) and 367–458 (KMKL…LRGD).

It belongs to the peptidase S1C family.

It localises to the periplasm. This is Probable periplasmic serine protease do/HhoA-like from Haemophilus influenzae (strain ATCC 51907 / DSM 11121 / KW20 / Rd).